The primary structure comprises 456 residues: Protein disulfide-isomerase TMX3 (456 aa).

The N-terminal stretch at 1 to 29 is a signal peptide; the sequence is MANAVGRRSWAALRLCAAVILLDLAVCKG. Positions 30-131 constitute a Thioredoxin domain; sequence FVEDLNESFK…KDDIIEFAHR (102 aa). Residues 30–378 are Lumenal-facing; sequence FVEDLNESFK…TIVSIFKSSP (349 aa). Residue Asn35 is glycosylated (N-linked (GlcNAc...) asparagine). Active-site nucleophile residues include Cys56 and Cys59. Cys56 and Cys59 form a disulfide bridge. N-linked (GlcNAc...) asparagine glycosylation is found at Asn261 and Asn316. A helical transmembrane segment spans residues 379–399; sequence LMGCFLFGLPLGVISIMCYGI. Topologically, residues 400 to 456 are cytoplasmic; it reads YTADTDGGYIEERYEVSKSEMENQEQIEESKEQESSSGGSLAPTVQEPKDVLEKKKD. The tract at residues 416 to 456 is disordered; it reads SKSEMENQEQIEESKEQESSSGGSLAPTVQEPKDVLEKKKD. The span at 446–456 shows a compositional bias: basic and acidic residues; it reads EPKDVLEKKKD. The short motif at 453-456 is the Di-lysine motif element; sequence KKKD.

Belongs to the protein disulfide isomerase family.

It localises to the endoplasmic reticulum membrane. The catalysed reaction is Catalyzes the rearrangement of -S-S- bonds in proteins.. Probable disulfide isomerase, which participates in the folding of proteins containing disulfide bonds. May act as a dithiol oxidase. Acts as a regulator of endoplasmic reticulum-mitochondria contact sites via its ability to regulate redox signals. In Mus musculus (Mouse), this protein is Protein disulfide-isomerase TMX3 (Tmx3).